A 548-amino-acid chain; its full sequence is T-complex protein 1 subunit theta (548 aa).

Residue alanine 2 is modified to N-acetylalanine. Residues tyrosine 47 and glycine 48 each contribute to the ADP site. A Mg(2+)-binding site is contributed by aspartate 99. Residues glycine 100, threonine 101, asparagine 102, phenylalanine 103, methionine 169, serine 170, lysine 171, glycine 412, and aspartate 499 each coordinate ADP. ATP-binding residues include glycine 100, threonine 101, and asparagine 102. Serine 170, lysine 171, glycine 412, aspartate 499, and lysine 504 together coordinate ATP. Position 505 is a phosphotyrosine (tyrosine 505). Positions 529–548 (PAGGPKPPSGKKDWDEDQND) are disordered.

In terms of assembly, component of the chaperonin-containing T-complex (TRiC), a hexadecamer composed of two identical back-to-back stacked rings enclosing a protein folding chamber. Each ring is made up of eight different subunits: TCP1/CCT1, CCT2, CCT3, CCT4, CCT5, CCT6A/CCT6, CCT7, CCT8.

It is found in the cytoplasm. It localises to the cytoskeleton. The protein localises to the microtubule organizing center. Its subcellular location is the centrosome. The protein resides in the cilium basal body. It carries out the reaction ATP + H2O = ADP + phosphate + H(+). In terms of biological role, component of the chaperonin-containing T-complex (TRiC), a molecular chaperone complex that assists the folding of actin, tubulin and other proteins upon ATP hydrolysis. The sequence is that of T-complex protein 1 subunit theta from Gallus gallus (Chicken).